We begin with the raw amino-acid sequence, 495 residues long: Probable cytosol aminopeptidase (495 aa).

2 residues coordinate Mn(2+): Lys-258 and Asp-263. Lys-270 is a catalytic residue. Mn(2+) is bound by residues Asp-281, Asp-340, and Glu-342. The active site involves Arg-344.

It belongs to the peptidase M17 family. The cofactor is Mn(2+).

The protein localises to the cytoplasm. The catalysed reaction is Release of an N-terminal amino acid, Xaa-|-Yaa-, in which Xaa is preferably Leu, but may be other amino acids including Pro although not Arg or Lys, and Yaa may be Pro. Amino acid amides and methyl esters are also readily hydrolyzed, but rates on arylamides are exceedingly low.. It carries out the reaction Release of an N-terminal amino acid, preferentially leucine, but not glutamic or aspartic acids.. In terms of biological role, presumably involved in the processing and regular turnover of intracellular proteins. Catalyzes the removal of unsubstituted N-terminal amino acids from various peptides. The sequence is that of Probable cytosol aminopeptidase from Leptospira interrogans serogroup Icterohaemorrhagiae serovar Lai (strain 56601).